We begin with the raw amino-acid sequence, 298 residues long: Cyclin-dependent kinase 2 (298 aa).

Met-1 is modified (N-acetylmethionine). A Protein kinase domain is found at 4–286; that stretch reads FQKVEKIGEG…AKAALAHPFF (283 aa). At Lys-6 the chain carries N6-acetyllysine. Residue 10–18 coordinates ATP; the sequence is IGEGTYGVV. Position 14 is a phosphothreonine (Thr-14). The residue at position 15 (Tyr-15) is a Phosphotyrosine; by WEE1. Tyr-19 bears the Phosphotyrosine mark. ATP contacts are provided by residues Lys-33, 81-83, and Asp-86; that span reads EFL. Asp-127 acts as the Proton acceptor in catalysis. ATP is bound by residues 129 to 132 and Asp-145; that span reads KPQN. Mg(2+) contacts are provided by Asn-132 and Asp-145. Thr-160 carries the post-translational modification Phosphothreonine; by CAK and CCRK.

It belongs to the protein kinase superfamily. CMGC Ser/Thr protein kinase family. CDC2/CDKX subfamily. Found in a complex with CABLES1, CCNA1 and CCNE1. Interacts with CABLES1. Interacts with UHRF2. Part of a complex consisting of UHRF2, CDK2 and CCNE1. Interacts with the Speedy/Ringo proteins SPDYA and SPDYC. Interaction with SPDYA promotes kinase activation via a conformation change that alleviates obstruction of the substrate-binding cleft by the T-loop. Found in a complex with both SPDYA and CDKN1B/KIP1. Binds to RB1 and CDK7. Binding to CDKN1A (p21) leads to CDK2/cyclin E inactivation at the G1-S phase DNA damage checkpoint, thereby arresting cells at the G1-S transition during DNA repair. Associated with PTPN6 and beta-catenin/CTNNB1. Interacts with CACUL1. May interact with CEP63. Interacts with ANKRD17. Interacts with CEBPA (when phosphorylated). Forms a ternary complex with CCNA2 and CDKN1B; CDKN1B inhibits the kinase activity of CDK2 through conformational rearrangements. Interacts with cyclins A, B1, B3, D, or E. Interacts with CDK2AP2. Mg(2+) is required as a cofactor. Post-translationally, phosphorylated at Thr-160 by CDK7 in a CAK complex. Phosphorylation at Thr-160 promotes kinase activity, whereas phosphorylation at Tyr-15 by WEE1 reduces slightly kinase activity. Phosphorylated on Thr-14 and Tyr-15 during S and G2 phases before being dephosphorylated by CDC25A. Nitrosylated after treatment with nitric oxide (DETA-NO).

It localises to the cytoplasm. The protein localises to the cytoskeleton. Its subcellular location is the microtubule organizing center. It is found in the centrosome. The protein resides in the nucleus. It localises to the cajal body. The protein localises to the endosome. It catalyses the reaction L-seryl-[protein] + ATP = O-phospho-L-seryl-[protein] + ADP + H(+). The catalysed reaction is L-threonyl-[protein] + ATP = O-phospho-L-threonyl-[protein] + ADP + H(+). With respect to regulation, phosphorylation at Thr-14 or Tyr-15 inactivates the enzyme, while phosphorylation at Thr-160 activates it. Inhibited by 1,25-dihydroxyvitamin D(3) (1,25-(OH)(2)D(3)), AG-024322, N-(4-Piperidinyl)-4-(2,6-dichlorobenzoylamino)-1H-pyrazole-3-carboxamide (AT7519), R547 (Ro-4584820), purine, pyrimidine and pyridine derivatives, 2-aminopyrimidines, paullones, thiazo derivatives, macrocyclic quinoxalin-2-one, pyrazolo[1,5-a]-1,3,5-triazine, pyrazolo[1,5-a]pyrimidine, 2-(1-ethyl-2-hydroxyethylamino)-6-benzylamino-9-isopropylpurine (roscovitine, seliciclib and CYC202), SNS-032 (BMS-387032), triazolo[1,5-a]pyrimidines, staurosporine and olomoucine. Stimulated by MYC. Inactivated by CDKN1A (p21). In terms of biological role, serine/threonine-protein kinase involved in the control of the cell cycle; essential for meiosis, but dispensable for mitosis. Phosphorylates CABLES1, CTNNB1, CDK2AP2, ERCC6, NBN, USP37, p53/TP53, NPM1, CDK7, RB1, BRCA2, MYC, NPAT, EZH2. Triggers duplication of centrosomes and DNA. Acts at the G1-S transition to promote the E2F transcriptional program and the initiation of DNA synthesis, and modulates G2 progression; controls the timing of entry into mitosis/meiosis by controlling the subsequent activation of cyclin B/CDK1 by phosphorylation, and coordinates the activation of cyclin B/CDK1 at the centrosome and in the nucleus. Crucial role in orchestrating a fine balance between cellular proliferation, cell death, and DNA repair in embryonic stem cells (ESCs). Activity of CDK2 is maximal during S phase and G2; activated by interaction with cyclin E during the early stages of DNA synthesis to permit G1-S transition, and subsequently activated by cyclin A2 (cyclin A1 in germ cells) during the late stages of DNA replication to drive the transition from S phase to mitosis, the G2 phase. EZH2 phosphorylation promotes H3K27me3 maintenance and epigenetic gene silencing. Cyclin E/CDK2 prevents oxidative stress-mediated Ras-induced senescence by phosphorylating MYC. Involved in G1-S phase DNA damage checkpoint that prevents cells with damaged DNA from initiating mitosis; regulates homologous recombination-dependent repair by phosphorylating BRCA2, this phosphorylation is low in S phase when recombination is active, but increases as cells progress towards mitosis. In response to DNA damage, double-strand break repair by homologous recombination a reduction of CDK2-mediated BRCA2 phosphorylation. Involved in regulation of telomere repair by mediating phosphorylation of NBN. Phosphorylation of RB1 disturbs its interaction with E2F1. NPM1 phosphorylation by cyclin E/CDK2 promotes its dissociates from unduplicated centrosomes, thus initiating centrosome duplication. Cyclin E/CDK2-mediated phosphorylation of NPAT at G1-S transition and until prophase stimulates the NPAT-mediated activation of histone gene transcription during S phase. Required for vitamin D-mediated growth inhibition by being itself inactivated. Involved in the nitric oxide- (NO) mediated signaling in a nitrosylation/activation-dependent manner. USP37 is activated by phosphorylation and thus triggers G1-S transition. CTNNB1 phosphorylation regulates insulin internalization. Phosphorylates FOXP3 and negatively regulates its transcriptional activity and protein stability. Phosphorylates ERCC6 which is essential for its chromatin remodeling activity at DNA double-strand breaks. Acts as a regulator of the phosphatidylinositol 3-kinase/protein kinase B signal transduction by mediating phosphorylation of the C-terminus of protein kinase B (PKB/AKT1 and PKB/AKT2), promoting its activation. The chain is Cyclin-dependent kinase 2 (CDK2) from Homo sapiens (Human).